Consider the following 1407-residue polypeptide: Transcription initiation factor TFIID subunit 2 (1407 aa).

2 positions are modified to phosphothreonine: threonine 158 and threonine 161. At serine 163 the chain carries Phosphoserine. Residues lysine 252 to asparagine 336 are disordered. A compositionally biased stretch (basic and acidic residues) spans glycine 277–glutamine 307. Residues lysine 304–asparagine 337 adopt a coiled-coil conformation. Residues aspartate 308–glutamate 326 show a composition bias toward acidic residues. Serine 318 carries the post-translational modification Phosphoserine. The segment at glutamate 1285–lysine 1350 is highly charged.

Belongs to the TAF2 family. The 1.2 MDa TFIID complex is composed of TATA binding protein (TBP) and the 14 TBP-associated factors. One copy of each TAF1, TAF2, TAF3, TAF7, TAF8, TAF11, TAF13, two copies of each TAF4, TAF5, TAF6, TAF9, TAF10, TAF12, and three copies of TAF14.

Its subcellular location is the nucleus. Functionally, functions as a component of the DNA-binding general transcription factor complex TFIID. Binding of TFIID to a promoter (with or without TATA element) is the initial step in pre-initiation complex (PIC) formation. TFIID plays a key role in the regulation of gene expression by RNA polymerase II through different activities such as transcription activator interaction, core promoter recognition and selectivity, TFIIA and TFIIB interaction, chromatin modification (histone acetylation by TAF1), facilitation of DNA opening and initiation of transcription. The sequence is that of Transcription initiation factor TFIID subunit 2 (TAF2) from Saccharomyces cerevisiae (strain ATCC 204508 / S288c) (Baker's yeast).